The following is a 752-amino-acid chain: Multifunctional tryptophan biosynthesis protein (752 aa).

The 200-residue stretch at 3 to 202 (FTLLIDNYDS…IQMKGGKWGG (200 aa)) folds into the Glutamine amidotransferase type-1 domain. 58 to 60 (GPG) contributes to the L-glutamine binding site. Cysteine 86 functions as the Nucleophile; for GATase activity in the catalytic mechanism. L-glutamine is bound at residue 136–137 (SL). Residues histidine 176 and glutamate 178 each act as for GATase activity in the active site. The tract at residues 231–495 (ILNKIHAQRL…DTKAFLRSLI (265 aa)) is indole-3-glycerol phosphate synthase. Positions 509 to 752 (LVKICGIRST…VEAFVKAVRG (244 aa)) are N-(5'-phosphoribosyl)anthranilate isomerase.

The enzyme catalyses N-(5-phospho-beta-D-ribosyl)anthranilate = 1-(2-carboxyphenylamino)-1-deoxy-D-ribulose 5-phosphate. It carries out the reaction 1-(2-carboxyphenylamino)-1-deoxy-D-ribulose 5-phosphate + H(+) = (1S,2R)-1-C-(indol-3-yl)glycerol 3-phosphate + CO2 + H2O. The catalysed reaction is chorismate + L-glutamine = anthranilate + pyruvate + L-glutamate + H(+). It participates in amino-acid biosynthesis; L-tryptophan biosynthesis; L-tryptophan from chorismate: step 1/5. The protein operates within amino-acid biosynthesis; L-tryptophan biosynthesis; L-tryptophan from chorismate: step 3/5. It functions in the pathway amino-acid biosynthesis; L-tryptophan biosynthesis; L-tryptophan from chorismate: step 4/5. Its function is as follows. Trifunctional enzyme bearing the Gln amidotransferase (GATase) domain of anthranilate synthase, indole-glycerolphosphate synthase, and phosphoribosylanthranilate isomerase activities. The sequence is that of Multifunctional tryptophan biosynthesis protein (TRP1) from Cryptococcus neoformans var. grubii serotype A (strain H99 / ATCC 208821 / CBS 10515 / FGSC 9487) (Filobasidiella neoformans var. grubii).